The primary structure comprises 586 residues: Arginine--tRNA ligase (586 aa).

The 'HIGH' region signature appears at 131 to 141 (ANPTGPLHVGH).

Belongs to the class-I aminoacyl-tRNA synthetase family. In terms of assembly, monomer.

It localises to the cytoplasm. It carries out the reaction tRNA(Arg) + L-arginine + ATP = L-arginyl-tRNA(Arg) + AMP + diphosphate. The protein is Arginine--tRNA ligase of Nitrosomonas eutropha (strain DSM 101675 / C91 / Nm57).